A 150-amino-acid polypeptide reads, in one-letter code: Globin-1 (150 aa).

A Globin domain is found at 11–150; sequence ALTAAEKATI…MICILLRSSY (140 aa). Residues His-74 and His-106 each contribute to the heme b site.

Belongs to the globin family. In terms of assembly, monomer.

This Petromyzon marinus (Sea lamprey) protein is Globin-1.